The sequence spans 253 residues: Probable transcriptional regulatory protein Tpet_0454 (253 aa).

This sequence belongs to the TACO1 family.

Its subcellular location is the cytoplasm. The chain is Probable transcriptional regulatory protein Tpet_0454 from Thermotoga petrophila (strain ATCC BAA-488 / DSM 13995 / JCM 10881 / RKU-1).